A 595-amino-acid chain; its full sequence is DNA mismatch repair protein MutL (595 aa).

The protein belongs to the DNA mismatch repair MutL/HexB family.

Functionally, this protein is involved in the repair of mismatches in DNA. It is required for dam-dependent methyl-directed DNA mismatch repair. May act as a 'molecular matchmaker', a protein that promotes the formation of a stable complex between two or more DNA-binding proteins in an ATP-dependent manner without itself being part of a final effector complex. The protein is DNA mismatch repair protein MutL of Endomicrobium trichonymphae.